A 274-amino-acid polypeptide reads, in one-letter code: tRNA pseudouridine synthase A (274 aa).

The Nucleophile role is filled by aspartate 51. Tyrosine 109 provides a ligand contact to substrate.

The protein belongs to the tRNA pseudouridine synthase TruA family. In terms of assembly, homodimer.

The enzyme catalyses uridine(38/39/40) in tRNA = pseudouridine(38/39/40) in tRNA. Its function is as follows. Formation of pseudouridine at positions 38, 39 and 40 in the anticodon stem and loop of transfer RNAs. The sequence is that of tRNA pseudouridine synthase A from Acidovorax ebreus (strain TPSY) (Diaphorobacter sp. (strain TPSY)).